The following is an 83-amino-acid chain: Snake venom metalloproteinase BnP1 (83 aa).

The region spanning 8 to 83 (SYIELAVVAD…NPQCIINQPI (76 aa)) is the Peptidase M12B domain. 3 residues coordinate Ca(2+): E11, C77, and N80.

The protein belongs to the venom metalloproteinase (M12B) family. P-I subfamily. As to quaternary structure, monomer. Zn(2+) is required as a cofactor. Expressed by the venom gland.

The protein resides in the secreted. Inhibited by EDTA. This protein is a zinc protease from snake venom that is devoid of significant myotoxic and hemorrhagic activities. It hydrolyzes the Aalpha-chain and more slowly the Bbeta-chain of fibrin and fibrinogen, without affecting the gamma-chains. It induces cell detachment and a apoptosis (anoikis) in endothelial cells. The chain is Snake venom metalloproteinase BnP1 from Bothrops pauloensis (Neuwied's lancehead).